The sequence spans 507 residues: RNA-splicing ligase RtcB homolog (507 aa).

The Mn(2+) site is built by aspartate 121, cysteine 124, histidine 229, histidine 261, and histidine 355. Residue 228 to 232 (NHYAE) participates in GMP binding. GMP is bound by residues 355–356 (HN), 404–407 (GGTM), serine 411, 430–433 (HGAG), and lysine 506. Residue histidine 430 is the GMP-histidine intermediate of the active site.

This sequence belongs to the RtcB family. As to quaternary structure, catalytic component of the tRNA-splicing ligase complex. Requires Mn(2+) as cofactor.

The catalysed reaction is a 3'-end 3'-phospho-ribonucleotide-RNA + a 5'-end dephospho-ribonucleoside-RNA + GTP = a ribonucleotidyl-ribonucleotide-RNA + GMP + diphosphate. The enzyme catalyses a 3'-end 2',3'-cyclophospho-ribonucleotide-RNA + a 5'-end dephospho-ribonucleoside-RNA + GTP + H2O = a ribonucleotidyl-ribonucleotide-RNA + GMP + diphosphate + H(+). Catalytic subunit of the tRNA-splicing ligase complex that acts by directly joining spliced tRNA halves to mature-sized tRNAs by incorporating the precursor-derived splice junction phosphate into the mature tRNA as a canonical 3',5'-phosphodiester. May act as an RNA ligase with broad substrate specificity, and may function toward other RNAs. The protein is RNA-splicing ligase RtcB homolog of Micromonas pusilla (strain CCMP1545) (Picoplanktonic green alga).